Consider the following 346-residue polypeptide: Biotin synthase (346 aa).

Residues 38 to 256 (RQVQVSTLLS…IAVARIMMPT (219 aa)) enclose the Radical SAM core domain. Residues Cys53, Cys57, and Cys60 each coordinate [4Fe-4S] cluster. The [2Fe-2S] cluster site is built by Cys97, Cys128, Cys188, and Arg260.

This sequence belongs to the radical SAM superfamily. Biotin synthase family. In terms of assembly, homodimer. Requires [4Fe-4S] cluster as cofactor. [2Fe-2S] cluster is required as a cofactor.

It catalyses the reaction (4R,5S)-dethiobiotin + (sulfur carrier)-SH + 2 reduced [2Fe-2S]-[ferredoxin] + 2 S-adenosyl-L-methionine = (sulfur carrier)-H + biotin + 2 5'-deoxyadenosine + 2 L-methionine + 2 oxidized [2Fe-2S]-[ferredoxin]. The protein operates within cofactor biosynthesis; biotin biosynthesis; biotin from 7,8-diaminononanoate: step 2/2. Catalyzes the conversion of dethiobiotin (DTB) to biotin by the insertion of a sulfur atom into dethiobiotin via a radical-based mechanism. In Escherichia coli O6:K15:H31 (strain 536 / UPEC), this protein is Biotin synthase.